The sequence spans 206 residues: MARYLGPKCKLSRREGTDLFLKSGVKANDEKCKMNTAPGQHGARRARLSDYGLQLREKQKVRRMYGVLEGQFKKYYVEANRRKGNTGATLLEILESRLDNVVYRMGFAATRAEARQLVVHKGIMLNGHTCNVPSAQVKAGDVVAVREKSKKQLRIQNAIELAKHRKELSWIDVNTDSLEGTMKSSPDRSELSADINEQLIIELYSK.

The S4 RNA-binding domain maps to 96–156 (SRLDNVVYRM…EKSKKQLRIQ (61 aa)).

The protein belongs to the universal ribosomal protein uS4 family. In terms of assembly, part of the 30S ribosomal subunit. Contacts protein S5. The interaction surface between S4 and S5 is involved in control of translational fidelity.

Functionally, one of the primary rRNA binding proteins, it binds directly to 16S rRNA where it nucleates assembly of the body of the 30S subunit. With S5 and S12 plays an important role in translational accuracy. This is Small ribosomal subunit protein uS4 from Francisella philomiragia subsp. philomiragia (strain ATCC 25017 / CCUG 19701 / FSC 153 / O#319-036).